A 433-amino-acid chain; its full sequence is ATP-dependent protease ATPase subunit HslU (433 aa).

ATP contacts are provided by residues V18, 60-65 (GVGKTE), D246, E311, and R383.

Belongs to the ClpX chaperone family. HslU subfamily. In terms of assembly, a double ring-shaped homohexamer of HslV is capped on each side by a ring-shaped HslU homohexamer. The assembly of the HslU/HslV complex is dependent on binding of ATP.

Its subcellular location is the cytoplasm. ATPase subunit of a proteasome-like degradation complex; this subunit has chaperone activity. The binding of ATP and its subsequent hydrolysis by HslU are essential for unfolding of protein substrates subsequently hydrolyzed by HslV. HslU recognizes the N-terminal part of its protein substrates and unfolds these before they are guided to HslV for hydrolysis. This Rhodopseudomonas palustris (strain BisB5) protein is ATP-dependent protease ATPase subunit HslU.